The following is a 485-amino-acid chain: Glutamate--tRNA ligase (485 aa).

Positions 11-21 match the 'HIGH' region motif; it reads PSPTGHLHIGN. The 'KMSKS' region motif lies at 252–256; sequence KLSKR. An ATP-binding site is contributed by Lys-255.

This sequence belongs to the class-I aminoacyl-tRNA synthetase family. Glutamate--tRNA ligase type 1 subfamily. In terms of assembly, monomer.

It localises to the cytoplasm. It carries out the reaction tRNA(Glu) + L-glutamate + ATP = L-glutamyl-tRNA(Glu) + AMP + diphosphate. In terms of biological role, catalyzes the attachment of glutamate to tRNA(Glu) in a two-step reaction: glutamate is first activated by ATP to form Glu-AMP and then transferred to the acceptor end of tRNA(Glu). The polypeptide is Glutamate--tRNA ligase (Bacillus cereus (strain ATCC 14579 / DSM 31 / CCUG 7414 / JCM 2152 / NBRC 15305 / NCIMB 9373 / NCTC 2599 / NRRL B-3711)).